A 178-amino-acid chain; its full sequence is ATP synthase subunit delta (178 aa).

The protein belongs to the ATPase delta chain family. F-type ATPases have 2 components, F(1) - the catalytic core - and F(0) - the membrane proton channel. F(1) has five subunits: alpha(3), beta(3), gamma(1), delta(1), epsilon(1). F(0) has three main subunits: a(1), b(2) and c(10-14). The alpha and beta chains form an alternating ring which encloses part of the gamma chain. F(1) is attached to F(0) by a central stalk formed by the gamma and epsilon chains, while a peripheral stalk is formed by the delta and b chains.

It localises to the cell membrane. Functionally, f(1)F(0) ATP synthase produces ATP from ADP in the presence of a proton or sodium gradient. F-type ATPases consist of two structural domains, F(1) containing the extramembraneous catalytic core and F(0) containing the membrane proton channel, linked together by a central stalk and a peripheral stalk. During catalysis, ATP synthesis in the catalytic domain of F(1) is coupled via a rotary mechanism of the central stalk subunits to proton translocation. This protein is part of the stalk that links CF(0) to CF(1). It either transmits conformational changes from CF(0) to CF(1) or is implicated in proton conduction. In Streptococcus gordonii (strain Challis / ATCC 35105 / BCRC 15272 / CH1 / DL1 / V288), this protein is ATP synthase subunit delta.